The sequence spans 321 residues: Acetyl-coenzyme A carboxylase carboxyl transferase subunit alpha (321 aa).

The CoA carboxyltransferase C-terminal domain occupies 39 to 293 (RLQQKSQTLA…RRALGDSLRQ (255 aa)).

The protein belongs to the AccA family. As to quaternary structure, acetyl-CoA carboxylase is a heterohexamer composed of biotin carboxyl carrier protein (AccB), biotin carboxylase (AccC) and two subunits each of ACCase subunit alpha (AccA) and ACCase subunit beta (AccD).

Its subcellular location is the cytoplasm. The enzyme catalyses N(6)-carboxybiotinyl-L-lysyl-[protein] + acetyl-CoA = N(6)-biotinyl-L-lysyl-[protein] + malonyl-CoA. The protein operates within lipid metabolism; malonyl-CoA biosynthesis; malonyl-CoA from acetyl-CoA: step 1/1. Its function is as follows. Component of the acetyl coenzyme A carboxylase (ACC) complex. First, biotin carboxylase catalyzes the carboxylation of biotin on its carrier protein (BCCP) and then the CO(2) group is transferred by the carboxyltransferase to acetyl-CoA to form malonyl-CoA. This is Acetyl-coenzyme A carboxylase carboxyl transferase subunit alpha from Bordetella avium (strain 197N).